A 318-amino-acid polypeptide reads, in one-letter code: Ribosomal RNA small subunit methyltransferase H (318 aa).

Residues G42–H44, D62, F86, D108, and Q115 each bind S-adenosyl-L-methionine.

This sequence belongs to the methyltransferase superfamily. RsmH family.

The protein resides in the cytoplasm. The enzyme catalyses cytidine(1402) in 16S rRNA + S-adenosyl-L-methionine = N(4)-methylcytidine(1402) in 16S rRNA + S-adenosyl-L-homocysteine + H(+). In terms of biological role, specifically methylates the N4 position of cytidine in position 1402 (C1402) of 16S rRNA. This chain is Ribosomal RNA small subunit methyltransferase H, found in Yersinia pestis (strain Pestoides F).